The chain runs to 662 residues: MSDDMSMGLPSSAGEHGVLRSMQEVAMSSQEASKMLRTYNIAWWGNNYYDVNELGHISVCPDPDVPEARVDLAQLVKTREAQGQRLPALFCFPQILQHRLRSINAAFKRARESYGYNGDYFLVYPIKVNQHRRVIESLIHSGEPLGLEAGSKAELMAVLAHAGMTRSVIVCNGYKDREYIRLALIGEKMGHKVYLVIEKMSEIAIVLDEAERLNVVPRLGVRARLASQGSGKWQSSGGEKSKFGLAATQVLQLVETLREAGRLDSLQLLHFHLGSQMANIRDIATGVRESARFYVELHKLGVNIQCFDVGGGLGVDYEGTRSQSDCSVNYGLNEYANNIIWAIGDACEENGLPHPTVITESGRAVTAHHTVLVSNIIGVERNEYTVPTAPVEDAPRALQSMWETWQEMHEPGTRRSLREWLHDSQMDLHDIHIGYSSGTFSLQERAWAEQLYLSMCHEVQKQLDPQNRAHRPIIDELQERMADKMYVNFSLFQSMPDAWGIDQLFPVLPLEGLDQVPERRAVLLDITCDSDGAIDHYIDGDGIATTMPMPEYDPENPPMLGFFMVGAYQEILGNMHNLFGDTEAVDVFVFPDGSVEVELSDEGDTVADMLQYVQLDPKTLLTQFRDQVKKTDLDAELQQQFLEEFEAGLYGYTYLEDENLLI.

The residue at position 127 (K127) is an N6-(pyridoxal phosphate)lysine. 307 to 317 contributes to the substrate binding site; that stretch reads FDVGGGLGVDY.

The protein belongs to the Orn/Lys/Arg decarboxylase class-II family. SpeA subfamily. As to quaternary structure, homotetramer. Mg(2+) serves as cofactor. Pyridoxal 5'-phosphate is required as a cofactor.

The protein localises to the periplasm. It carries out the reaction L-arginine + H(+) = agmatine + CO2. It functions in the pathway amine and polyamine biosynthesis; agmatine biosynthesis; agmatine from L-arginine: step 1/1. In terms of biological role, catalyzes the biosynthesis of agmatine from arginine. This is Biosynthetic arginine decarboxylase from Shigella flexneri.